Here is a 539-residue protein sequence, read N- to C-terminus: uncharacterized protein (539 aa).

The tract at residues 34–63 is disordered; sequence AASEVSPIPQERPTTSLRKPTPRVQRPATD. The next 11 membrane-spanning stretches (helical) occupy residues 103 to 123, 141 to 161, 184 to 204, 244 to 264, 277 to 299, 325 to 345, 360 to 380, 399 to 419, 434 to 454, 470 to 490, and 496 to 516; these read FATP…TTVF, MTAT…LDTV, ILLL…GILL, GIFH…IFLN, FLGA…IIYI, LAVP…LVTF, VLST…AAAA, THVS…ILFL, VVAL…ADNT, IGGV…AIIL, and WGLY…AGVE.

This sequence belongs to the multi antimicrobial extrusion (MATE) (TC 2.A.66.1) family.

Its subcellular location is the vacuole membrane. This is an uncharacterized protein from Schizosaccharomyces pombe (strain 972 / ATCC 24843) (Fission yeast).